A 277-amino-acid polypeptide reads, in one-letter code: Collectin-10 (277 aa).

Residues 1 to 27 (MSRKKEQQLRKYGTLVVLFIFQVQIFG) form the signal peptide. Positions 41 to 82 (THTILPGPKGDDGEKGDRGEVGKQGKVGPKGPKGNKGTVGDV) are disordered. Over residues 49 to 63 (KGDDGEKGDRGEVGK) the composition is skewed to basic and acidic residues. The Collagen-like domain occupies 56–115 (GDRGEVGKQGKVGPKGPKGNKGTVGDVGDQGMLGKIGPIGGKGDKGAKGISGVSGKKGKA). Residues 64–79 (QGKVGPKGPKGNKGTV) show a composition bias toward low complexity. Positions 155–271 (TDEKFYYIVK…CQVTIYFICE (117 aa)) constitute a C-type lectin domain. Disulfide bonds link C176-C270 and C248-C262. N-linked (GlcNAc...) asparagine glycosylation occurs at N258.

The protein belongs to the COLEC10/COLEC11 family. As to expression, widely expressed. Highly expressed in lung. Weakly expressed in larynx, syrinx and cranial air sac. Expressed throughout the lower gastrointestinal tract in increasing levels starting from a faint signal in duodenum and ending with relatively high signals in proctodeum, coprodeum and urodeum. In the upper part of the gastrointestinal tract, expressed in tongue, crop, and mucosa of the crop.

It is found in the secreted. It localises to the golgi apparatus. The protein localises to the cytoplasm. In terms of biological role, lectin that binds to various sugars: galactose &gt; mannose = fucose &gt; N-acetylglucosamine &gt; N-acetylgalactosamine. Acts as a chemoattractant, probably involved in the regulation of cell migration. This Gallus gallus (Chicken) protein is Collectin-10 (COLEC10).